The chain runs to 267 residues: Imidazole glycerol phosphate synthase subunit HisF (267 aa).

Active-site residues include D22 and D141.

It belongs to the HisA/HisF family. Heterodimer of HisH and HisF.

The protein localises to the cytoplasm. The enzyme catalyses 5-[(5-phospho-1-deoxy-D-ribulos-1-ylimino)methylamino]-1-(5-phospho-beta-D-ribosyl)imidazole-4-carboxamide + L-glutamine = D-erythro-1-(imidazol-4-yl)glycerol 3-phosphate + 5-amino-1-(5-phospho-beta-D-ribosyl)imidazole-4-carboxamide + L-glutamate + H(+). The protein operates within amino-acid biosynthesis; L-histidine biosynthesis; L-histidine from 5-phospho-alpha-D-ribose 1-diphosphate: step 5/9. Functionally, IGPS catalyzes the conversion of PRFAR and glutamine to IGP, AICAR and glutamate. The HisF subunit catalyzes the cyclization activity that produces IGP and AICAR from PRFAR using the ammonia provided by the HisH subunit. This Mycobacterium tuberculosis (strain ATCC 25177 / H37Ra) protein is Imidazole glycerol phosphate synthase subunit HisF.